We begin with the raw amino-acid sequence, 68 residues long: U1-hexatoxin-Hv1a (68 aa).

Intrachain disulfides connect Cys3–Cys14, Cys8–Cys22, Cys13–Cys48, Cys32–Cys56, and Cys50–Cys63.

It belongs to the MIT-like AcTx family. Expressed by the venom gland.

The protein localises to the secreted. The chain is U1-hexatoxin-Hv1a from Hadronyche versuta (Blue mountains funnel-web spider).